The following is a 343-amino-acid chain: Probable beta-1,3-galactosyltransferase 13 (343 aa).

The helical; Signal-anchor for type II membrane protein transmembrane segment at 22 to 42 (LIVFTSLAIGLTGFLFGLSTI) threads the bilayer. N-linked (GlcNAc...) asparagine glycosylation is present at asparagine 265.

The protein belongs to the glycosyltransferase 31 family. Mn(2+) is required as a cofactor.

The protein resides in the golgi apparatus membrane. It functions in the pathway protein modification; protein glycosylation. Its function is as follows. Beta-1,3-galactosyltransferase that transfers galactose from UDP-galactose to substrates with a terminal glycosyl residue. This Arabidopsis thaliana (Mouse-ear cress) protein is Probable beta-1,3-galactosyltransferase 13 (B3GALT13).